A 610-amino-acid chain; its full sequence is E3 ubiquitin-protein ligase hrd-1 (610 aa).

The first 23 residues, 1–23, serve as a signal peptide directing secretion; the sequence is MRVSAGLMIGGSCVATAATILNA. Residues 24-41 lie on the Lumenal side of the membrane; that stretch reads FLINKQFYPSIVYLSKSN. A helical membrane pass occupies residues 42–62; that stretch reads ASMAVIYVQGIVLVYLMFQLL. At 63-99 the chain is on the cytoplasmic side; that stretch reads KSILFGDLRAAEAEHLSERTWHAVLETCLAFTVFRDD. The chain crosses the membrane as a helical span at residues 100-120; it reads FSAIFVMQFIGLLFIKCFHWL. The Lumenal segment spans residues 121–144; that stretch reads ADDRVDMMERSPVITLRFHLRMMT. The helical transmembrane segment at 145 to 165 threads the bilayer; the sequence is VLAALGFADSYFVSSAYFTTI. At 166-170 the chain is on the cytoplasmic side; the sequence is TRGAS. A helical transmembrane segment spans residues 171–191; that stretch reads AQIVFGFEYAILLALVLHVTI. Topologically, residues 192-215 are lumenal; the sequence is KYLLHMHDLRNPQSWDNKAVYLLY. A helical transmembrane segment spans residues 216-236; the sequence is AELFINLIRCLLYGFFAVVML. The Cytoplasmic segment spans residues 237–610; sequence RVHTFPLFSV…ARLLGENANQ (374 aa). The RING-type; atypical zinc-finger motif lies at 292-333; the sequence is CIICREEMTVDASPKRLPCSHVFHAHCLRSWFQRQQTCPTCR. 3 disordered regions span residues 386-408, 452-480, and 521-610; these read QPAG…GPFP, VNTT…LRRM, and RPVV…NANQ. The span at 452 to 474 shows a compositional bias: polar residues; sequence VNTTQGTSSETPPVNPSYSQLST. A compositionally biased stretch (low complexity) spans 560-589; that stretch reads TESPSTSSTAPSTSSPVTASSTPTTSSTRT.

This sequence belongs to the HRD1 family. Homodimer.

Its subcellular location is the endoplasmic reticulum membrane. The enzyme catalyses S-ubiquitinyl-[E2 ubiquitin-conjugating enzyme]-L-cysteine + [acceptor protein]-L-lysine = [E2 ubiquitin-conjugating enzyme]-L-cysteine + N(6)-ubiquitinyl-[acceptor protein]-L-lysine.. Its pathway is protein modification; protein ubiquitination. Its function is as follows. Acts as an E3 ubiquitin-protein ligase which accepts ubiquitin specifically from endoplasmic reticulum-associated ubc-7 E2 ligase and transfers it to substrates, promoting their degradation. Component of the endoplasmic reticulum quality control (ERQC) system, which is also called the ER-associated degradation (ERAD) system, involved in ubiquitin-dependent degradation of misfolded endoplasmic reticulum proteins. Also promotes the degradation of normal but naturally short-lived proteins. Protects cells from ER stress-induced apoptosis. Thought to play a role together with hsp-3 in developmental growth and function of intestinal cells and to play a role together with hsp-4 in gonad formation. Plays a key role in the degradation of the potassium channel slo-1, perhaps acting directly, in targeting slo-1 to the ER-associated degradation pathway (ERAD), and also indirectly, via activation of the transcription factor skn-1, which mediates proteasomal homeostasis. In Caenorhabditis elegans, this protein is E3 ubiquitin-protein ligase hrd-1 (sel-11).